The chain runs to 257 residues: Protein CUSTOS (257 aa).

The segment covering 1–11 has biased composition (low complexity); the sequence is MSDLESSSSSS. Positions 1 to 72 are disordered; it reads MSDLESSSSS…HEQDGNELQT (72 aa). Residues 32–41 show a composition bias toward basic and acidic residues; it reads QRPRGPEKPG. Ser55 carries the post-translational modification Phosphoserine. Position 73 is a phosphothreonine (Thr73). 2 disordered regions span residues 120–157 and 170–257; these read FTSI…RRCR and SAIH…VPSN. 2 stretches are compositionally biased toward basic residues: residues 180-190 and 227-237; these read KKKKRKLKKKA and TKKKKRKKKTK. A Nucleolar localization signal (NLS) motif is present at residues 228–236; that stretch reads KKKKRKKKT.

Belongs to the CUSTOS family.

The protein localises to the nucleus envelope. Plays a role in the regulation of Wnt signaling pathway during early development. This Bos taurus (Bovine) protein is Protein CUSTOS.